The chain runs to 732 residues: Polyphosphate kinase (732 aa).

Residue Asn-61 participates in ATP binding. Residues Arg-417 and Arg-447 each coordinate Mg(2+). His-477 serves as the catalytic Phosphohistidine intermediate. ATP contacts are provided by Tyr-510, Arg-606, and His-634. Residues 699 to 718 (DGTYRQRQPAPGEAERGTHS) form a disordered region.

It belongs to the polyphosphate kinase 1 (PPK1) family. Mg(2+) serves as cofactor. In terms of processing, an intermediate of this reaction is the autophosphorylated ppk in which a phosphate is covalently linked to a histidine residue through a N-P bond.

It catalyses the reaction [phosphate](n) + ATP = [phosphate](n+1) + ADP. In terms of biological role, catalyzes the reversible transfer of the terminal phosphate of ATP to form a long-chain polyphosphate (polyP). The protein is Polyphosphate kinase of Thermosynechococcus vestitus (strain NIES-2133 / IAM M-273 / BP-1).